A 510-amino-acid polypeptide reads, in one-letter code: Fumarate hydratase, mitochondrial (510 aa).

Residues 1-44 constitute a mitochondrion transit peptide; the sequence is MYRALRLLARSRPLVRAPAAALASAPGLGGAAVPSFWPPNAARM. 3 positions are modified to N6-acetyllysine; alternate: lysine 61, lysine 66, and lysine 80. Lysine 61, lysine 66, and lysine 80 each carry N6-succinyllysine; alternate. Threonine 85 and threonine 90 each carry phosphothreonine. Lysine 94 bears the N6-acetyllysine mark. Residues lysine 115 and lysine 122 each carry the N6-acetyllysine; alternate modification. 2 positions are modified to N6-succinyllysine; alternate: lysine 115 and lysine 122. Substrate-binding positions include 145 to 147, 176 to 179, and 186 to 188; these read SGT, HPND, and SSN. Lysine 213 carries the post-translational modification N6-acetyllysine. An N6-acetyllysine; alternate modification is found at lysine 223. Position 223 is an N6-succinyllysine; alternate (lysine 223). Threonine 234 lines the substrate pocket. Catalysis depends on histidine 235, which acts as the Proton donor/acceptor. Threonine 236 carries the post-translational modification Phosphothreonine; by PRKDC. An N6-acetyllysine modification is found at lysine 256. Lysine 292 is modified (N6-acetyllysine; alternate). An N6-succinyllysine; alternate modification is found at lysine 292. The active site involves serine 365. Residues serine 366 and 371–373 each bind substrate; that span reads KVN. At serine 366 the chain carries Phosphoserine. N6-succinyllysine occurs at positions 467 and 473. The residue at position 502 (lysine 502) is an N6-acetyllysine.

Belongs to the class-II fumarase/aspartase family. Fumarase subfamily. In terms of assembly, homotetramer. Interacts with H2AZ1. In terms of processing, phosphorylation at Thr-236 by PRKDC in response to DNA damage promotes translocation to the nucleus and recruitment to DNA double-strand breaks (DSBs). Expressed in red blood cells; underexpressed in red blood cells (cytoplasm) of patients with hereditary non-spherocytic hemolytic anemia of unknown etiology.

It localises to the mitochondrion. It is found in the cytoplasm. The protein localises to the cytosol. The protein resides in the nucleus. Its subcellular location is the chromosome. The catalysed reaction is (S)-malate = fumarate + H2O. It participates in carbohydrate metabolism; tricarboxylic acid cycle; (S)-malate from fumarate: step 1/1. Functionally, catalyzes the reversible stereospecific interconversion of fumarate to L-malate. Experiments in other species have demonstrated that specific isoforms of this protein act in defined pathways and favor one direction over the other. Catalyzes the hydration of fumarate to L-malate in the tricarboxylic acid (TCA) cycle to facilitate a transition step in the production of energy in the form of NADH. In terms of biological role, catalyzes the dehydration of L-malate to fumarate. Fumarate metabolism in the cytosol plays a role during urea cycle and arginine metabolism; fumarate being a by-product of the urea cycle and amino-acid catabolism. Also plays a role in DNA repair by promoting non-homologous end-joining (NHEJ). In response to DNA damage and phosphorylation by PRKDC, translocates to the nucleus and accumulates at DNA double-strand breaks (DSBs): acts by catalyzing formation of fumarate, an inhibitor of KDM2B histone demethylase activity, resulting in enhanced dimethylation of histone H3 'Lys-36' (H3K36me2). This Homo sapiens (Human) protein is Fumarate hydratase, mitochondrial.